Here is a 474-residue protein sequence, read N- to C-terminus: Chromosomal replication initiator protein DnaA (474 aa).

The tract at residues 1-90 (MSSSLWLQCL…RQVVVPSSQI (90 aa)) is domain I, interacts with DnaA modulators. The tract at residues 91–137 (IAPAAPAVTLAPRPLPATRILQDDAPSRSWEPAPSPVQPESKSGYRS) is domain II. Positions 112–137 (QDDAPSRSWEPAPSPVQPESKSGYRS) are disordered. Positions 128-137 (QPESKSGYRS) are enriched in polar residues. Positions 138 to 354 (NVNPKHNFNN…GALNRVIANA (217 aa)) are domain III, AAA+ region. ATP-binding residues include Gly182, Gly184, Lys185, and Thr186. Residues 355 to 474 (NFTGRAITID…YSNLIRTLST (120 aa)) form a domain IV, binds dsDNA region.

The protein belongs to the DnaA family. In terms of assembly, oligomerizes as a right-handed, spiral filament on DNA at oriC.

The protein resides in the cytoplasm. In terms of biological role, plays an essential role in the initiation and regulation of chromosomal replication. ATP-DnaA binds to the origin of replication (oriC) to initiate formation of the DNA replication initiation complex once per cell cycle. Binds the DnaA box (a 9 base pair repeat at the origin) and separates the double-stranded (ds)DNA. Forms a right-handed helical filament on oriC DNA; dsDNA binds to the exterior of the filament while single-stranded (ss)DNA is stabiized in the filament's interior. The ATP-DnaA-oriC complex binds and stabilizes one strand of the AT-rich DNA unwinding element (DUE), permitting loading of DNA polymerase. After initiation quickly degrades to an ADP-DnaA complex that is not apt for DNA replication. Binds acidic phospholipids. The protein is Chromosomal replication initiator protein DnaA of Photobacterium profundum (strain SS9).